The primary structure comprises 154 residues: MEADWRRIDIDAFDPESGRLTAADLVPPYETTVTLQELQPRMNQLRSLATSGDSLGAVQLLTTDPPYSADAPTKEQYFKSVLEALTQVRQADIGNVIKNLSDSQRDVLVKYLYKGMSVPQGQKQGGVLLAWLERITQVSGVTPIVHYISDRRTV.

Threonine 142 bears the Phosphothreonine mark.

Belongs to the ARPC5 family. As to quaternary structure, component of the Arp2/3 complex composed of ARP2, ARP3, ARC40/p41-ARC, ARC35/p34-ARC, ARC18/p21-ARC, ARC19/p20-ARC and ARC16/p16-ARC.

It is found in the cytoplasm. Its subcellular location is the cytoskeleton. The protein resides in the actin patch. Functionally, functions as a component of the Arp2/3 complex which is involved in regulation of actin polymerization and together with an activating nucleation-promoting factor (NPF) mediates the formation of branched actin networks. The sequence is that of Actin-related protein 2/3 complex subunit 5 (ARC15) from Saccharomyces cerevisiae (strain ATCC 204508 / S288c) (Baker's yeast).